The primary structure comprises 178 residues: Small ribosomal subunit protein uS4 (178 aa).

In terms of domain architecture, S4 RNA-binding spans 104–166 (RRLQTIVYRK…PNSPMASENH (63 aa)). The interval 158-178 (NSPMASENHPERTAAVSEENQ) is disordered.

Belongs to the universal ribosomal protein uS4 family. In terms of assembly, part of the 30S ribosomal subunit. Contacts protein S5. The interaction surface between S4 and S5 is involved in control of translational fidelity.

In terms of biological role, one of the primary rRNA binding proteins, it binds directly to 16S rRNA where it nucleates assembly of the body of the 30S subunit. Its function is as follows. With S5 and S12 plays an important role in translational accuracy. The sequence is that of Small ribosomal subunit protein uS4 from Methanococcus maripaludis (strain C5 / ATCC BAA-1333).